A 546-amino-acid chain; its full sequence is Probable ganciclovir kinase (546 aa).

Over residues 1-11 (MEQLKTPQNQK) the composition is skewed to polar residues. Residues 1 to 29 (MEQLKTPQNQKTRPRNMLPKKKGKELKKR) form a disordered region. A compositionally biased stretch (basic residues) spans 12–29 (TRPRNMLPKKKGKELKKR). ATP-binding positions include 185-193 (LGSGSYGMV) and Lys202. Asp297 (proton acceptor) is an active-site residue.

It belongs to the protein kinase superfamily. Tyr protein kinase family. HCMV ganciclovir subfamily.

Its function is as follows. Phosphorylates the antiviral nucleoside analog ganciclovir. This chain is Probable ganciclovir kinase (U69), found in Human herpesvirus 7 (strain JI) (HHV-7).